A 214-amino-acid chain; its full sequence is tRNA (guanine-N(7)-)-methyltransferase (214 aa).

Positions 44, 69, 96, and 118 each coordinate S-adenosyl-L-methionine. Asp-118 is a catalytic residue. Substrate is bound at residue Lys-122. Residues 124-129 (KHEKRR) form an interaction with RNA region. Substrate contacts are provided by residues Asp-154 and 191–194 (TEYE).

This sequence belongs to the class I-like SAM-binding methyltransferase superfamily. TrmB family.

It carries out the reaction guanosine(46) in tRNA + S-adenosyl-L-methionine = N(7)-methylguanosine(46) in tRNA + S-adenosyl-L-homocysteine. It participates in tRNA modification; N(7)-methylguanine-tRNA biosynthesis. Its function is as follows. Catalyzes the formation of N(7)-methylguanine at position 46 (m7G46) in tRNA. The sequence is that of tRNA (guanine-N(7)-)-methyltransferase from Enterococcus faecalis (strain ATCC 700802 / V583).